We begin with the raw amino-acid sequence, 312 residues long: Aspartate carbamoyltransferase catalytic subunit (312 aa).

Residues arginine 58 and threonine 59 each contribute to the carbamoyl phosphate site. Residue lysine 86 participates in L-aspartate binding. Carbamoyl phosphate is bound by residues arginine 108, histidine 136, and glutamine 139. 2 residues coordinate L-aspartate: arginine 169 and arginine 223. Glycine 264 and proline 265 together coordinate carbamoyl phosphate.

It belongs to the aspartate/ornithine carbamoyltransferase superfamily. ATCase family. Heterododecamer (2C3:3R2) of six catalytic PyrB chains organized as two trimers (C3), and six regulatory PyrI chains organized as three dimers (R2).

The enzyme catalyses carbamoyl phosphate + L-aspartate = N-carbamoyl-L-aspartate + phosphate + H(+). Its pathway is pyrimidine metabolism; UMP biosynthesis via de novo pathway; (S)-dihydroorotate from bicarbonate: step 2/3. Catalyzes the condensation of carbamoyl phosphate and aspartate to form carbamoyl aspartate and inorganic phosphate, the committed step in the de novo pyrimidine nucleotide biosynthesis pathway. This is Aspartate carbamoyltransferase catalytic subunit from Desulforapulum autotrophicum (strain ATCC 43914 / DSM 3382 / VKM B-1955 / HRM2) (Desulfobacterium autotrophicum).